A 149-amino-acid chain; its full sequence is Large ribosomal subunit protein bL9 (149 aa).

The protein belongs to the bacterial ribosomal protein bL9 family.

Binds to the 23S rRNA. The sequence is that of Large ribosomal subunit protein bL9 from Synechococcus sp. (strain JA-2-3B'a(2-13)) (Cyanobacteria bacterium Yellowstone B-Prime).